Here is a 28-residue protein sequence, read N- to C-terminus: Ribosome-inactivating protein pleuturegin (28 aa).

Belongs to the ribosome-inactivating protein family.

It carries out the reaction Endohydrolysis of the N-glycosidic bond at one specific adenosine on the 28S rRNA.. Functionally, inhibits protein synthesis in animal cells. Does not possess ribonuclease activity. This Pleurotus tuber-regium (King tuber oyster mushroom) protein is Ribosome-inactivating protein pleuturegin.